Consider the following 446-residue polypeptide: Signal recognition particle protein (446 aa).

GTP contacts are provided by residues 106–113, 188–192, and 246–249; these read GLQGSGKT, DTAGR, and SKLD.

The protein belongs to the GTP-binding SRP family. SRP54 subfamily. As to quaternary structure, part of the signal recognition particle protein translocation system, which is composed of SRP and FtsY.

It localises to the cytoplasm. It catalyses the reaction GTP + H2O = GDP + phosphate + H(+). Functionally, involved in targeting and insertion of nascent membrane proteins into the cytoplasmic membrane. Binds to the hydrophobic signal sequence of the ribosome-nascent chain (RNC) as it emerges from the ribosomes. The SRP-RNC complex is then targeted to the cytoplasmic membrane where it interacts with the SRP receptor FtsY. The protein is Signal recognition particle protein of Mycoplasma genitalium (strain ATCC 33530 / DSM 19775 / NCTC 10195 / G37) (Mycoplasmoides genitalium).